The sequence spans 372 residues: Glutamate 5-kinase (372 aa).

K14 provides a ligand contact to ATP. Substrate is bound by residues S54, D141, and N153. Position 173-174 (173-174 (TD)) interacts with ATP. One can recognise a PUA domain in the interval 280 to 358 (RGRVVIDGGA…SEIESVLGHL (79 aa)).

This sequence belongs to the glutamate 5-kinase family.

The protein localises to the cytoplasm. It carries out the reaction L-glutamate + ATP = L-glutamyl 5-phosphate + ADP. The protein operates within amino-acid biosynthesis; L-proline biosynthesis; L-glutamate 5-semialdehyde from L-glutamate: step 1/2. Catalyzes the transfer of a phosphate group to glutamate to form L-glutamate 5-phosphate. The protein is Glutamate 5-kinase of Cupriavidus taiwanensis (strain DSM 17343 / BCRC 17206 / CCUG 44338 / CIP 107171 / LMG 19424 / R1) (Ralstonia taiwanensis (strain LMG 19424)).